A 103-amino-acid polypeptide reads, in one-letter code: Flagellar hook-basal body complex protein FliE (103 aa).

This sequence belongs to the FliE family.

Its subcellular location is the bacterial flagellum basal body. In Cronobacter sakazakii (strain ATCC BAA-894) (Enterobacter sakazakii), this protein is Flagellar hook-basal body complex protein FliE.